A 711-amino-acid chain; its full sequence is Ribosomal RNA large subunit methyltransferase K/L (711 aa).

Residues 43 to 154 enclose the THUMP domain; sequence TLYRTLLWSR…RENLVISLDL (112 aa).

The protein belongs to the methyltransferase superfamily. RlmKL family.

It is found in the cytoplasm. The catalysed reaction is guanosine(2445) in 23S rRNA + S-adenosyl-L-methionine = N(2)-methylguanosine(2445) in 23S rRNA + S-adenosyl-L-homocysteine + H(+). It carries out the reaction guanosine(2069) in 23S rRNA + S-adenosyl-L-methionine = N(2)-methylguanosine(2069) in 23S rRNA + S-adenosyl-L-homocysteine + H(+). Its function is as follows. Specifically methylates the guanine in position 2445 (m2G2445) and the guanine in position 2069 (m7G2069) of 23S rRNA. In Haemophilus influenzae (strain ATCC 51907 / DSM 11121 / KW20 / Rd), this protein is Ribosomal RNA large subunit methyltransferase K/L.